Reading from the N-terminus, the 592-residue chain is Aspartate--tRNA(Asp/Asn) ligase (592 aa).

Position 175 (glutamate 175) interacts with L-aspartate. The tract at residues 199-202 is aspartate; the sequence is QLFK. Arginine 221 serves as a coordination point for L-aspartate. ATP contacts are provided by residues 221–223 and glutamine 230; that span reads RDE. Histidine 447 is a binding site for L-aspartate. Position 481 (glutamate 481) interacts with ATP. Arginine 488 contacts L-aspartate. Residue 533-536 participates in ATP binding; that stretch reads GIDR.

This sequence belongs to the class-II aminoacyl-tRNA synthetase family. Type 1 subfamily. In terms of assembly, homodimer.

The protein resides in the cytoplasm. It carries out the reaction tRNA(Asx) + L-aspartate + ATP = L-aspartyl-tRNA(Asx) + AMP + diphosphate. Functionally, aspartyl-tRNA synthetase with relaxed tRNA specificity since it is able to aspartylate not only its cognate tRNA(Asp) but also tRNA(Asn). Reaction proceeds in two steps: L-aspartate is first activated by ATP to form Asp-AMP and then transferred to the acceptor end of tRNA(Asp/Asn). The protein is Aspartate--tRNA(Asp/Asn) ligase of Dictyoglomus turgidum (strain DSM 6724 / Z-1310).